The sequence spans 299 residues: Taste receptor type 2 member 50 (299 aa).

M1 is a topological domain (extracellular). The chain crosses the membrane as a helical span at residues 2 to 22 (VTFLHIFFSILILVLFVLGNF). Residues 23–55 (ANGFIALVNFIDLVKRKKISSADQILTALAVSR) are Cytoplasmic-facing. A helical membrane pass occupies residues 56–76 (IGLLWALLLNWYLTVLNPAFY). Residues 77–87 (SVELRITSYNA) lie on the Extracellular side of the membrane. A helical membrane pass occupies residues 88 to 108 (WVVTNHFSMWLAASLSIFYLL). The Cytoplasmic segment spans residues 109-126 (KIANFSNLIFLHLKRRVR). Residues 127-147 (SVILVILLGPLTFLVCHLFVA) traverse the membrane as a helical segment. At 148–181 (NMDESMSAEEYEGNMTGKLKLRNTVHLSYLTVTT) the chain is on the extracellular side. An N-linked (GlcNAc...) asparagine glycan is attached at N161. A helical membrane pass occupies residues 182–202 (LWSFIPFTLSLISFLMLICSL). Residues 203 to 229 (CKHVKKMQLHGEGSQDLSTKVHIKALQ) are Cytoplasmic-facing. A helical transmembrane segment spans residues 230-250 (TLISFLLLCAIFFLFLIISIW). Topologically, residues 251-259 (NPRRLQNDP) are extracellular. A helical transmembrane segment spans residues 260 to 280 (VVVVSKAVGNIYLALDSFILI). Residues 281–299 (WRTKKLKHTFLLILCQIRC) are Cytoplasmic-facing.

The protein belongs to the G-protein coupled receptor T2R family.

Its subcellular location is the membrane. Its function is as follows. Receptor that may play a role in the perception of bitterness and is gustducin-linked. May play a role in sensing the chemical composition of the gastrointestinal content. The activity of this receptor may stimulate alpha gustducin, mediate PLC-beta-2 activation and lead to the gating of TRPM5. This Pongo pygmaeus (Bornean orangutan) protein is Taste receptor type 2 member 50 (TAS2R50).